A 379-amino-acid polypeptide reads, in one-letter code: Orotidine 5'-phosphate decarboxylase (379 aa).

Residues D42, 64-66 (KTH), and 99-108 (DRKFGDIGHT) each bind substrate. K101 (proton donor) is an active-site residue. Residues 165-198 (PTMDQFDDAEDAKDDEPATVNDNGSNMMEKPIYA) are disordered. Positions 169-178 (QFDDAEDAKD) are enriched in acidic residues. Substrate is bound by residues Y331 and R350.

Belongs to the OMP decarboxylase family.

It carries out the reaction orotidine 5'-phosphate + H(+) = UMP + CO2. Its pathway is pyrimidine metabolism; UMP biosynthesis via de novo pathway; UMP from orotate: step 2/2. This chain is Orotidine 5'-phosphate decarboxylase (pyr4), found in Hypocrea atroviridis (Trichoderma atroviride).